The primary structure comprises 384 residues: Magnesium transporter MRS2-I (384 aa).

2 helical membrane-spanning segments follow: residues 319–339 (LFLS…GIFG) and 356–376 (WVVL…VAYA). Positions 339–341 (GMN) match the Required for magnesium transport activity motif.

The protein belongs to the CorA metal ion transporter (MIT) (TC 1.A.35.5) family.

Its subcellular location is the membrane. Functionally, magnesium transporter that may mediate the influx of magnesium. The sequence is that of Magnesium transporter MRS2-I (MRS2-I) from Oryza sativa subsp. japonica (Rice).